The primary structure comprises 360 residues: Membrane-bound lytic murein transglycosylase C (360 aa).

A signal peptide spans Met1–Ser16. Residue Cys17 is the site of N-palmitoyl cysteine attachment. The S-diacylglycerol cysteine moiety is linked to residue Cys17.

This sequence belongs to the transglycosylase Slt family.

The protein localises to the cell outer membrane. The catalysed reaction is Exolytic cleavage of the (1-&gt;4)-beta-glycosidic linkage between N-acetylmuramic acid (MurNAc) and N-acetylglucosamine (GlcNAc) residues in peptidoglycan, from either the reducing or the non-reducing ends of the peptidoglycan chains, with concomitant formation of a 1,6-anhydrobond in the MurNAc residue.. In terms of biological role, murein-degrading enzyme. May play a role in recycling of muropeptides during cell elongation and/or cell division. This chain is Membrane-bound lytic murein transglycosylase C, found in Salmonella typhi.